Consider the following 498-residue polypeptide: Glycerol kinase (498 aa).

Thr-12 lines the ADP pocket. ATP-binding residues include Thr-12, Thr-13, and Ser-14. Thr-12 contacts sn-glycerol 3-phosphate. An ADP-binding site is contributed by Arg-16. Sn-glycerol 3-phosphate-binding residues include Arg-82, Glu-83, Tyr-134, and Asp-243. Residues Arg-82, Glu-83, Tyr-134, Asp-243, and Gln-244 each coordinate glycerol. ADP is bound by residues Thr-265 and Gly-308. Residues Thr-265, Gly-308, Gln-312, and Gly-411 each contribute to the ATP site. Gly-411 contributes to the ADP binding site.

Belongs to the FGGY kinase family.

It catalyses the reaction glycerol + ATP = sn-glycerol 3-phosphate + ADP + H(+). It participates in polyol metabolism; glycerol degradation via glycerol kinase pathway; sn-glycerol 3-phosphate from glycerol: step 1/1. Its activity is regulated as follows. Inhibited by fructose 1,6-bisphosphate (FBP). Functionally, key enzyme in the regulation of glycerol uptake and metabolism. Catalyzes the phosphorylation of glycerol to yield sn-glycerol 3-phosphate. In Brucella canis (strain ATCC 23365 / NCTC 10854 / RM-666), this protein is Glycerol kinase.